The primary structure comprises 288 residues: Histone-lysine N-methyltransferase Suv4-20 (288 aa).

The region spanning 128-238 is the SET domain; that stretch reads QECKRYSQEG…PGDEITCFYG (111 aa).

Belongs to the class V-like SAM-binding methyltransferase superfamily. Histone-lysine methyltransferase family. Suvar4-20 subfamily.

The protein resides in the nucleus. It is found in the chromosome. It carries out the reaction N(6)-methyl-L-lysyl(20)-[histone H4] + S-adenosyl-L-methionine = N(6),N(6)-dimethyl-L-lysyl(20)-[histone H4] + S-adenosyl-L-homocysteine + H(+). The enzyme catalyses N(6),N(6)-dimethyl-L-lysyl(20)-[histone H4] + S-adenosyl-L-methionine = N(6),N(6),N(6)-trimethyl-L-lysyl(20)-[histone H4] + S-adenosyl-L-homocysteine + H(+). Histone methyltransferase that specifically di- and trimethylates 'Lys-20' of histone H4 (H4K20me2/me3). H4 'Lys-20' trimethylation represents a specific tag for epigenetic transcriptional repression. Contributes to dosage compensation of X chromosome-relative to autosome-linked gene expression, possibly by converting H4K20me1 to H4K20m2/me3 on autosomes. Involved in the regulation of growth and body fat metabolism downstream of the TOR complex 2 pathway. The chain is Histone-lysine N-methyltransferase Suv4-20 (set-4) from Caenorhabditis elegans.